Here is a 385-residue protein sequence, read N- to C-terminus: Probable dual-specificity RNA methyltransferase RlmN (385 aa).

Residues 1-24 (MTATTAESGNLLPLVSGRSRPPRH) are disordered. The Proton acceptor role is filled by Glu-114. One can recognise a Radical SAM core domain in the interval 120 to 364 (YPQRATVCVS…AATVRDTRGR (245 aa)). A disulfide bridge connects residues Cys-127 and Cys-370. Residues Cys-134, Cys-138, and Cys-141 each coordinate [4Fe-4S] cluster. Residues 194–195 (GE), Ser-228, 251–253 (SLH), and Asn-327 contribute to the S-adenosyl-L-methionine site. Cys-370 acts as the S-methylcysteine intermediate in catalysis.

This sequence belongs to the radical SAM superfamily. RlmN family. The cofactor is [4Fe-4S] cluster.

Its subcellular location is the cytoplasm. The catalysed reaction is adenosine(2503) in 23S rRNA + 2 reduced [2Fe-2S]-[ferredoxin] + 2 S-adenosyl-L-methionine = 2-methyladenosine(2503) in 23S rRNA + 5'-deoxyadenosine + L-methionine + 2 oxidized [2Fe-2S]-[ferredoxin] + S-adenosyl-L-homocysteine. It carries out the reaction adenosine(37) in tRNA + 2 reduced [2Fe-2S]-[ferredoxin] + 2 S-adenosyl-L-methionine = 2-methyladenosine(37) in tRNA + 5'-deoxyadenosine + L-methionine + 2 oxidized [2Fe-2S]-[ferredoxin] + S-adenosyl-L-homocysteine. Specifically methylates position 2 of adenine 2503 in 23S rRNA and position 2 of adenine 37 in tRNAs. The chain is Probable dual-specificity RNA methyltransferase RlmN from Parafrankia sp. (strain EAN1pec).